The sequence spans 73 residues: Large ribosomal subunit protein eL20 (73 aa).

Belongs to the eukaryotic ribosomal protein eL20 family. Part of the 50S ribosomal subunit. Binds 23S rRNA.

This Methanococcus aeolicus (strain ATCC BAA-1280 / DSM 17508 / OCM 812 / Nankai-3) protein is Large ribosomal subunit protein eL20.